The sequence spans 634 residues: Serine/threonine kinase NLK (634 aa).

Residues 240–531 (SQPDRPIGYG…VEEALQHRYL (292 aa)) form the Protein kinase domain. Residues 246 to 254 (IGYGAFGVV) and Lys-269 each bind ATP. Catalysis depends on Asp-366, which acts as the Proton acceptor.

Belongs to the protein kinase superfamily. CMGC Ser/Thr protein kinase family. MAP kinase subfamily. As to quaternary structure, component of the beta-catenin-lit-1 complex (also called the lit-1/wrm-1 complex or the wrm-1/lit-1 kinase complex) at least composed of lit-1 and wrm-1. Interacts with wrm-1 (via N-terminus); the interaction is direct and activates lit-1 kinase activity which leads to the phosphorylation of pop-1. This promotes pop-1 interaction with par-5 and translocation of pop-1 from the nucleus to the cytoplasm. Interacts with pop-1 (when phosphorylated on 'Ser-118' and 'Ser-127'); the interaction is dependent on the beta-catenin-lit-1 complex. The cofactor is Mg(2+). Expressed in the pharynx and seam and vulval cells.

It is found in the cytoplasm. The protein resides in the cell cortex. Its subcellular location is the nucleus. It carries out the reaction L-seryl-[protein] + ATP = O-phospho-L-seryl-[protein] + ADP + H(+). The catalysed reaction is L-threonyl-[protein] + ATP = O-phospho-L-threonyl-[protein] + ADP + H(+). Has a role in the Wnt signaling pathway controlling the asymmetry of cell divisions during embryogenesis. Operates in the AB and EMS cell lineages influencing cell specification. Required for body wall muscle development, endoderm development, pop-1 asymmetry and T-cell division asymmetry. Component of the beta-catenin-lit-1 complex which promotes the phosphorylation, down-regulation and subcellular relocation of pop-1. Regulates plp-1 nuclear localization in embryos. Plays a role in male tail tip morphogenesis. The chain is Serine/threonine kinase NLK from Caenorhabditis elegans.